Reading from the N-terminus, the 66-residue chain is UPF0434 protein Mnod_1613 (66 aa).

The protein belongs to the UPF0434 family.

This is UPF0434 protein Mnod_1613 from Methylobacterium nodulans (strain LMG 21967 / CNCM I-2342 / ORS 2060).